The chain runs to 199 residues: 3-isopropylmalate dehydratase small subunit (199 aa).

This sequence belongs to the LeuD family. LeuD type 1 subfamily. Heterodimer of LeuC and LeuD.

The catalysed reaction is (2R,3S)-3-isopropylmalate = (2S)-2-isopropylmalate. The protein operates within amino-acid biosynthesis; L-leucine biosynthesis; L-leucine from 3-methyl-2-oxobutanoate: step 2/4. Its function is as follows. Catalyzes the isomerization between 2-isopropylmalate and 3-isopropylmalate, via the formation of 2-isopropylmaleate. The sequence is that of 3-isopropylmalate dehydratase small subunit from Aeromonas salmonicida (strain A449).